Here is a 353-residue protein sequence, read N- to C-terminus: MVRIIVKNVSKVFKKGKVVALDNVNINIENGERFGILGPSGAGKTTFMRIIAGLDVPSTGELYFDDRLVASNGKLIVPPEDRKIGMVFQTWALYPNLTAFENIAFPLTNMKMSKEEIRKRVEEVAKILDIHHVLNHFPRELSGGQQQRVALARALVKDPSLLLLDEPFSNLDARMRDSARALVKEVQSRLGVTLLVVSHDPADIFAIADRVGVLVKGKLVQVGKPEDLYDNPVSIQVASLIGEINELEGKVTNEGVVIGSLRFPVSVSSDRAIIGIRPEDVKLSKDVIKDDSWILVGKGKVKVIGYQGGLFRITITPLDSEEEIFTYSDHPIHSGEEVLVYVRKDKIKVFEKN.

An ABC transporter domain is found at 4-241 (IIVKNVSKVF…PVSIQVASLI (238 aa)). Residues 40–46 (SGAGKTT), glutamine 89, and glutamate 166 each bind ATP.

This sequence belongs to the ABC transporter superfamily. In terms of assembly, the complex is composed of two ATP-binding proteins (GlcV), two transmembrane proteins (GlcT and GlcU) and a solute-binding protein (GlcS). Forms transient head-to-tail homodimers in the presence of ATP-Mg(2+).

It localises to the cell membrane. The enzyme catalyses D-glucose(out) + ATP + H2O = D-glucose(in) + ADP + phosphate + H(+). Part of the ABC transporter complex GlcSTUV involved in glucose uptake. Responsible for energy coupling to the transport system. In vitro, as a free subunit, exhibits a constitutive ATPase activity. This Saccharolobus solfataricus (strain ATCC 35092 / DSM 1617 / JCM 11322 / P2) (Sulfolobus solfataricus) protein is Glucose import ATP-binding protein GlcV.